The chain runs to 273 residues: Endochitinase EP3 (273 aa).

The first 28 residues, 1 to 28 (MLTPTISKSISLVTILLVLQAFSNTTKA), serve as a signal peptide directing secretion. A glycan (N-linked (GlcNAc...) asparagine) is linked at Asn-24. One can recognise a Chitin-binding type-1 domain in the interval 29–63 (QNCGCSSELCCSQFGFCGNTSDYCGVGCQQGPCFA). Intrachain disulfides connect Cys-31/Cys-39, Cys-33/Cys-45, Cys-38/Cys-52, and Cys-56/Cys-61. N-linked (GlcNAc...) asparagine glycosylation is present at Asn-47. The segment at 70 to 273 (VSVAEIVTQE…GVDPGNNLTC (204 aa)) is catalytic. Glu-136 (proton donor) is an active-site residue. Residues Asn-157 and Asn-270 are each glycosylated (N-linked (GlcNAc...) asparagine).

It belongs to the glycosyl hydrolase 19 family. Chitinase class I subfamily. Expressed in cells surrounding embryos, stems, seedlings, pollen, roots, shoots, inflorescence, flowers, siliques and leaves. Present in seedpods and seed embryos, but not in roots, inflorescence stems, leaves and flowers.

The catalysed reaction is Random endo-hydrolysis of N-acetyl-beta-D-glucosaminide (1-&gt;4)-beta-linkages in chitin and chitodextrins.. Probably involved in hypersensitive reaction upon Xanthomonas campestris infection. In Arabidopsis thaliana (Mouse-ear cress), this protein is Endochitinase EP3.